Here is a 291-residue protein sequence, read N- to C-terminus: Ribosomal RNA small subunit methyltransferase A (291 aa).

6 residues coordinate S-adenosyl-L-methionine: H37, L39, G64, E85, D110, and N131.

Belongs to the class I-like SAM-binding methyltransferase superfamily. rRNA adenine N(6)-methyltransferase family. RsmA subfamily.

Its subcellular location is the cytoplasm. It catalyses the reaction adenosine(1518)/adenosine(1519) in 16S rRNA + 4 S-adenosyl-L-methionine = N(6)-dimethyladenosine(1518)/N(6)-dimethyladenosine(1519) in 16S rRNA + 4 S-adenosyl-L-homocysteine + 4 H(+). Specifically dimethylates two adjacent adenosines (A1518 and A1519) in the loop of a conserved hairpin near the 3'-end of 16S rRNA in the 30S particle. May play a critical role in biogenesis of 30S subunits. The polypeptide is Ribosomal RNA small subunit methyltransferase A (Dehalococcoides mccartyi (strain ATCC BAA-2100 / JCM 16839 / KCTC 5957 / BAV1)).